The following is a 362-amino-acid chain: UDP-arabinopyranose mutase 3 (362 aa).

Residues 106–108 carry the DXD motif motif; that stretch reads DDD. The N-linked (Glc...) arginine glycan is linked to Arg-154.

The protein belongs to the RGP family. As to quaternary structure, heterodimer with RGP1. Requires Mn(2+) as cofactor. It depends on Mg(2+) as a cofactor. Post-translationally, reversibly glycosylated in vitro by UDP-glucose, UDP-xylose and UDP-galactose, but not UDP-mannose. In terms of tissue distribution, specifically expressed in developing seeds.

The protein localises to the cytoplasm. The protein resides in the cytosol. It localises to the golgi apparatus. It catalyses the reaction UDP-beta-L-arabinofuranose = UDP-beta-L-arabinopyranose. Functionally, UDP-L-arabinose mutase involved in the biosynthesis of cell wall non-cellulosic polysaccharides. Catalyzes the interconvertion of UDP-L-arabinopyranose (UDP-Arap) and UDP-L-arabinofuranose (UDP-Araf). Preferentially catalyzes the formation of UDP-Arap from UDP-Araf. At thermodynamic equilibrium in vitro the ratio of the pyranose form over the furanose form is 95:5. Is not active on other UDP-sugars (UDP-Gal, UDP-Xyl, UDP-Glc, GDP-Man and GDP-Fuc). Is probably active as heteromer in vivo. This is UDP-arabinopyranose mutase 3 from Arabidopsis thaliana (Mouse-ear cress).